The following is a 175-amino-acid chain: Adenine phosphoribosyltransferase (175 aa).

The protein belongs to the purine/pyrimidine phosphoribosyltransferase family. In terms of assembly, homodimer.

Its subcellular location is the cytoplasm. The catalysed reaction is AMP + diphosphate = 5-phospho-alpha-D-ribose 1-diphosphate + adenine. It functions in the pathway purine metabolism; AMP biosynthesis via salvage pathway; AMP from adenine: step 1/1. Functionally, catalyzes a salvage reaction resulting in the formation of AMP, that is energically less costly than de novo synthesis. In Synechococcus sp. (strain JA-3-3Ab) (Cyanobacteria bacterium Yellowstone A-Prime), this protein is Adenine phosphoribosyltransferase.